A 388-amino-acid chain; its full sequence is MNLHEYQAKALFAEYGLPVSEGFACDTAQEAVEAAGHIGGDMWVVKCQVHAGGRGKAGGVKVTGDKEEIRAFAEHWLGKNLVTYQTDEKGQPVAKILVESCTDIANELYLGAVVDRATRRVVFMASTEGGVEIETVAEETPELIHKAIIDPLTGPQPYQARDLGFKLGLNPTQMKQFTKVFMGLAKMFEDHDFALLEINPLVITDEGNIHCLDGKIGIDGNALFRQPKIRDMHDPSQDDAREAHAAKFELNYVALDGNVGCMVNGAGLAMGTMDIVNLHGGKPANFLDVGGGATKERVAEAFKIILSDSNVKAVLVNIFGGIVRCDMIAEGIIGAVKEVGVEVPVVVRLEGTNANLGRDVLASSGLDIIAAESLTDAAVKVVAAAEGK.

One can recognise an ATP-grasp domain in the interval 9–244 (KALFAEYGLP…PSQDDAREAH (236 aa)). Residues Lys-46, 53–55 (GRG), Glu-99, Thr-102, and Glu-107 each bind ATP. Asn-199 and Asp-213 together coordinate Mg(2+). Substrate-binding positions include Asn-264 and 321–323 (GIV).

Belongs to the succinate/malate CoA ligase beta subunit family. As to quaternary structure, heterotetramer of two alpha and two beta subunits. Requires Mg(2+) as cofactor.

It catalyses the reaction succinate + ATP + CoA = succinyl-CoA + ADP + phosphate. The enzyme catalyses GTP + succinate + CoA = succinyl-CoA + GDP + phosphate. It functions in the pathway carbohydrate metabolism; tricarboxylic acid cycle; succinate from succinyl-CoA (ligase route): step 1/1. Its function is as follows. Succinyl-CoA synthetase functions in the citric acid cycle (TCA), coupling the hydrolysis of succinyl-CoA to the synthesis of either ATP or GTP and thus represents the only step of substrate-level phosphorylation in the TCA. The beta subunit provides nucleotide specificity of the enzyme and binds the substrate succinate, while the binding sites for coenzyme A and phosphate are found in the alpha subunit. The polypeptide is Succinate--CoA ligase [ADP-forming] subunit beta (Shewanella halifaxensis (strain HAW-EB4)).